We begin with the raw amino-acid sequence, 432 residues long: UDP-N-acetylglucosamine 1-carboxyvinyltransferase (432 aa).

A phosphoenolpyruvate-binding site is contributed by 22 to 23; that stretch reads KN. Arg96 lines the UDP-N-acetyl-alpha-D-glucosamine pocket. Cys120 functions as the Proton donor in the catalytic mechanism. Residue Cys120 is modified to 2-(S-cysteinyl)pyruvic acid O-phosphothioketal. UDP-N-acetyl-alpha-D-glucosamine contacts are provided by residues 125–129, Asp310, and Ile332; that span reads RPVDL.

It belongs to the EPSP synthase family. MurA subfamily.

Its subcellular location is the cytoplasm. It carries out the reaction phosphoenolpyruvate + UDP-N-acetyl-alpha-D-glucosamine = UDP-N-acetyl-3-O-(1-carboxyvinyl)-alpha-D-glucosamine + phosphate. The protein operates within cell wall biogenesis; peptidoglycan biosynthesis. Cell wall formation. Adds enolpyruvyl to UDP-N-acetylglucosamine. The polypeptide is UDP-N-acetylglucosamine 1-carboxyvinyltransferase (Caulobacter sp. (strain K31)).